Reading from the N-terminus, the 473-residue chain is Ribulose bisphosphate carboxylase large chain (473 aa).

Residues Met-1–Ser-2 constitute a propeptide that is removed on maturation. Residues Asn-123 and Thr-173 each coordinate substrate. Lys-175 (proton acceptor) is an active-site residue. Lys-177 serves as a coordination point for substrate. Positions 201, 203, and 204 each coordinate Mg(2+). The residue at position 201 (Lys-201) is an N6-carboxylysine. Ser-208 carries the post-translational modification Phosphoserine. The active-site Proton acceptor is His-294. Positions 295 and 327 each coordinate substrate. The residue at position 330 (Thr-330) is a Phosphothreonine. Ser-379 provides a ligand contact to substrate.

It belongs to the RuBisCO large chain family. Type I subfamily. In terms of assembly, heterohexadecamer of 8 large chains and 8 small chains; disulfide-linked. The disulfide link is formed within the large subunit homodimers. The cofactor is Mg(2+). Post-translationally, the disulfide bond which can form in the large chain dimeric partners within the hexadecamer appears to be associated with oxidative stress and protein turnover.

The protein localises to the plastid. It localises to the chloroplast. It catalyses the reaction 2 (2R)-3-phosphoglycerate + 2 H(+) = D-ribulose 1,5-bisphosphate + CO2 + H2O. The catalysed reaction is D-ribulose 1,5-bisphosphate + O2 = 2-phosphoglycolate + (2R)-3-phosphoglycerate + 2 H(+). Its function is as follows. RuBisCO catalyzes two reactions: the carboxylation of D-ribulose 1,5-bisphosphate, the primary event in carbon dioxide fixation, as well as the oxidative fragmentation of the pentose substrate in the photorespiration process. Both reactions occur simultaneously and in competition at the same active site. The protein is Ribulose bisphosphate carboxylase large chain of Sinapis alba (White mustard).